Reading from the N-terminus, the 100-residue chain is Urease subunit gamma (100 aa).

The protein belongs to the urease gamma subunit family. As to quaternary structure, heterotrimer of UreA (gamma), UreB (beta) and UreC (alpha) subunits. Three heterotrimers associate to form the active enzyme.

The protein localises to the cytoplasm. The catalysed reaction is urea + 2 H2O + H(+) = hydrogencarbonate + 2 NH4(+). Its pathway is nitrogen metabolism; urea degradation; CO(2) and NH(3) from urea (urease route): step 1/1. The protein is Urease subunit gamma of Yersinia aldovae.